We begin with the raw amino-acid sequence, 24 residues long: Brevinin-1BYb (24 aa).

Residues cysteine 18 and cysteine 24 are joined by a disulfide bond.

Expressed by the skin glands.

It localises to the secreted. Antibacterial activity against Gram-positive bacterium S.aureus and Gram-negative bacterium E.coli. Has moderate antifungal activity against C.albicans and strong hemolytic activity. The sequence is that of Brevinin-1BYb from Rana boylii (Foothill yellow-legged frog).